The chain runs to 222 residues: 7-cyano-7-deazaguanine synthase (222 aa).

14-24 (FSGGQDSTTCL) is a binding site for ATP. C190, C199, C202, and C205 together coordinate Zn(2+).

This sequence belongs to the QueC family. As to quaternary structure, homodimer. Zn(2+) is required as a cofactor.

The catalysed reaction is 7-carboxy-7-deazaguanine + NH4(+) + ATP = 7-cyano-7-deazaguanine + ADP + phosphate + H2O + H(+). It participates in purine metabolism; 7-cyano-7-deazaguanine biosynthesis. Catalyzes the ATP-dependent conversion of 7-carboxy-7-deazaguanine (CDG) to 7-cyano-7-deazaguanine (preQ(0)). This is 7-cyano-7-deazaguanine synthase from Staphylococcus aureus (strain bovine RF122 / ET3-1).